Here is a 463-residue protein sequence, read N- to C-terminus: Arginine biosynthesis bifunctional protein ArgJ, chloroplastic (463 aa).

6 residues coordinate substrate: threonine 207, lysine 233, threonine 244, glutamate 331, asparagine 458, and threonine 463. Threonine 244 (nucleophile) is an active-site residue.

This sequence belongs to the ArgJ family. In terms of assembly, heterodimer of an alpha and a beta chain.

It localises to the plastid. Its subcellular location is the chloroplast. It catalyses the reaction N(2)-acetyl-L-ornithine + L-glutamate = N-acetyl-L-glutamate + L-ornithine. The enzyme catalyses L-glutamate + acetyl-CoA = N-acetyl-L-glutamate + CoA + H(+). It participates in amino-acid biosynthesis; L-arginine biosynthesis; L-ornithine and N-acetyl-L-glutamate from L-glutamate and N(2)-acetyl-L-ornithine (cyclic): step 1/1. It functions in the pathway amino-acid biosynthesis; L-arginine biosynthesis; N(2)-acetyl-L-ornithine from L-glutamate: step 1/4. Functionally, catalyzes two activities which are involved in the cyclic version of arginine biosynthesis: the synthesis of acetylglutamate from glutamate and acetyl-CoA, and of ornithine by transacetylation between acetylornithine and glutamate. This chain is Arginine biosynthesis bifunctional protein ArgJ, chloroplastic, found in Oryza sativa subsp. japonica (Rice).